The sequence spans 387 residues: UDP-N-acetylglucosamine--N-acetylmuramyl-(pentapeptide) pyrophosphoryl-undecaprenol N-acetylglucosamine transferase (387 aa).

The interval 1–22 (MSEHVRSAGPPQASTAPSGGSA) is disordered. Residues 41-43 (TGG), asparagine 158, arginine 194, serine 222, isoleucine 276, and glutamine 321 each bind UDP-N-acetyl-alpha-D-glucosamine.

Belongs to the glycosyltransferase 28 family. MurG subfamily.

The protein resides in the cell inner membrane. It catalyses the reaction di-trans,octa-cis-undecaprenyl diphospho-N-acetyl-alpha-D-muramoyl-L-alanyl-D-glutamyl-meso-2,6-diaminopimeloyl-D-alanyl-D-alanine + UDP-N-acetyl-alpha-D-glucosamine = di-trans,octa-cis-undecaprenyl diphospho-[N-acetyl-alpha-D-glucosaminyl-(1-&gt;4)]-N-acetyl-alpha-D-muramoyl-L-alanyl-D-glutamyl-meso-2,6-diaminopimeloyl-D-alanyl-D-alanine + UDP + H(+). It functions in the pathway cell wall biogenesis; peptidoglycan biosynthesis. Its function is as follows. Cell wall formation. Catalyzes the transfer of a GlcNAc subunit on undecaprenyl-pyrophosphoryl-MurNAc-pentapeptide (lipid intermediate I) to form undecaprenyl-pyrophosphoryl-MurNAc-(pentapeptide)GlcNAc (lipid intermediate II). This chain is UDP-N-acetylglucosamine--N-acetylmuramyl-(pentapeptide) pyrophosphoryl-undecaprenol N-acetylglucosamine transferase, found in Polaromonas sp. (strain JS666 / ATCC BAA-500).